Here is a 664-residue protein sequence, read N- to C-terminus: Metal-nicotianamine transporter YSL2 (664 aa).

14 helical membrane-spanning segments follow: residues 31-51 (ITVR…VICL), 55-75 (LTTG…FVFL), 103-123 (CAVA…LLGL), 147-167 (GVGW…VVLV), 209-229 (GFIK…FYSG), 268-288 (LVNL…WPLI), 314-334 (FICI…ILFF), 378-398 (IPLW…IIAI), 409-429 (FVLV…YGAG), 457-477 (VVAG…SADL), 496-516 (VAQA…FFLF), 549-569 (SALP…AVAA), 594-614 (FLVG…VYVW), and 629-649 (VASG…LLAL).

The protein belongs to the YSL (TC 2.A.67.2) family. Expressed in roots, leaves and weakly in shoots. Restricted to the veins, to the central cylinder of the young roots and to the pericycle and the endodermis cells facing the meta-xylem tubes in older roots. Expressed in the vasculature of sepals, petals, anthers, stigma and siliques, but not in developing seeds or in meristematic zones.

Its subcellular location is the cell membrane. In terms of biological role, may be involved in the lateral transport of nicotianamine-chelated metals in the vasculature. The protein is Metal-nicotianamine transporter YSL2 (YSL2) of Arabidopsis thaliana (Mouse-ear cress).